We begin with the raw amino-acid sequence, 116 residues long: Large ribosomal subunit protein bL20c (116 aa).

It belongs to the bacterial ribosomal protein bL20 family.

The protein resides in the plastid. It is found in the chloroplast. In terms of biological role, binds directly to 23S ribosomal RNA and is necessary for the in vitro assembly process of the 50S ribosomal subunit. It is not involved in the protein synthesizing functions of that subunit. The polypeptide is Large ribosomal subunit protein bL20c (Cyanidioschyzon merolae (strain NIES-3377 / 10D) (Unicellular red alga)).